The chain runs to 174 residues: RNA polymerase sigma factor CarQ (174 aa).

A Polymerase core binding motif is present at residues 39–52 (DLLQATFLSVIRSR). The disordered stretch occupies residues 86-106 (YASREDTATPASAAPDDSDPS). Positions 136-155 (FEEIGALRGISPGAARLRAH) form a DNA-binding region, H-T-H motif.

This sequence belongs to the sigma-70 factor family. ECF subfamily.

In terms of biological role, sigma factors are initiation factors that promote the attachment of RNA polymerase to specific initiation sites and are then released. This sigma factor regulates genes for the light induced biosynthesis of carotenoids. This is RNA polymerase sigma factor CarQ (carQ) from Myxococcus xanthus.